The following is a 936-amino-acid chain: Coiled-coil domain-containing protein 191 (936 aa).

Coiled coils occupy residues 189–270 and 364–440; these read RLTM…VKAA and RDYT…LQAA. Residues 495–541 are disordered; it reads LGRTTTGNLQGSLQNVSLSAPGNKQHKTLGAEPSQQPGSNETLRTTS. Polar residues-rich tracts occupy residues 497–516 and 527–541; these read RTTT…SAPG and PSQQ…RTTS. Residues 554-592 adopt a coiled-coil conformation; sequence NRHVFQQQLIEKQKKKLQEQQKTILELKKNLQLAEAQWA. 2 disordered regions span residues 607 to 656 and 691 to 714; these read LSKP…TPHP and KAQE…RKRE. Residues 662-739 adopt a coiled-coil conformation; the sequence is EERAIQRAEC…IKRNQQLEAI (78 aa).

In Homo sapiens (Human), this protein is Coiled-coil domain-containing protein 191 (CCDC191).